A 213-amino-acid polypeptide reads, in one-letter code: MSLLVKRWKELAEIKAELAARDWFFATSGNLSIKVTDDPLTFLVTASGKDKRKQTDEDFLLVDASGNPVENTHLKPSAETLLHVEIYKKTNAGCSLHVHTIDNNVISELYGDEGEVAFSGQEIIKAFGIWEEDAVIRIPIIPNYAHIPTLAKEFAKHVNGDAGAVLIRNHGITVWGRDAFEAKKFLEAWEFLFSWHVKWLLLKQTAVLPVVKP.

Zn(2+)-binding residues include His97 and His99.

Belongs to the aldolase class II family. MtnB subfamily. In terms of assembly, homotetramer. Zn(2+) serves as cofactor.

It catalyses the reaction 5-(methylsulfanyl)-D-ribulose 1-phosphate = 5-methylsulfanyl-2,3-dioxopentyl phosphate + H2O. It functions in the pathway amino-acid biosynthesis; L-methionine biosynthesis via salvage pathway; L-methionine from S-methyl-5-thio-alpha-D-ribose 1-phosphate: step 2/6. In terms of biological role, catalyzes the dehydration of methylthioribulose-1-phosphate (MTRu-1-P) into 2,3-diketo-5-methylthiopentyl-1-phosphate (DK-MTP-1-P). The protein is Methylthioribulose-1-phosphate dehydratase of Geobacillus sp. (strain WCH70).